The following is a 295-amino-acid chain: Protease HtpX (295 aa).

Transmembrane regions (helical) follow at residues 4–24 and 42–62; these read ILLF…TLSL and QLLV…LFIS. His147 serves as a coordination point for Zn(2+). Glu148 is a catalytic residue. Zn(2+) is bound at residue His151. The next 2 membrane-spanning stretches (helical) occupy residues 158–178 and 199–219; these read VTLA…ARII and ITTI…VMWF. Glu224 lines the Zn(2+) pocket.

It belongs to the peptidase M48B family. Zn(2+) serves as cofactor.

The protein resides in the cell inner membrane. The sequence is that of Protease HtpX from Pseudomonas savastanoi pv. phaseolicola (strain 1448A / Race 6) (Pseudomonas syringae pv. phaseolicola (strain 1448A / Race 6)).